The primary structure comprises 825 residues: 5E5 antigen (825 aa).

Residues 126–825 form a disordered region; that stretch reads LSRDGYETET…RPRPSPKSPR (700 aa). Over residues 157–180 the composition is skewed to pro residues; it reads PRAPPEPPDPGAPRPPPDPGPLPL. The segment covering 191–200 has biased composition (polar residues); the sequence is VQVSTEQLLM. Residues 217–237 show a composition bias toward basic and acidic residues; that stretch reads TRGDRTQEGGEKPREQREGPR. A compositionally biased stretch (low complexity) spans 247 to 256; it reads QQEESPQQEP. Basic and acidic residues-rich tracts occupy residues 257 to 277, 315 to 342, and 392 to 406; these read SSER…HEGE, VPKD…RDWT, and QERE…ESPR. A compositionally biased stretch (basic residues) spans 437-449; it reads RRPRKRRGRKGRM. A compositionally biased stretch (low complexity) spans 455 to 477; it reads TTATSASATGGPAEEAGASAPEG. Residues 485–505 are compositionally biased toward basic residues; that stretch reads GRARGPRQQARRRHGPQRRRG. The span at 524–536 shows a compositional bias: polar residues; that stretch reads GTTSGEQRADQSQ. Residues 537-562 show a composition bias toward low complexity; sequence TLPALAGAPTAHAHAVPGPGPAAATL. A compositionally biased stretch (basic residues) spans 565 to 575; the sequence is RGRRGSWRGGR. Residues 576 to 588 are compositionally biased toward gly residues; that stretch reads RGGGAGASGGGRG. The segment covering 721–733 has biased composition (pro residues); that stretch reads FPPPPPTRPPPVL. Residues 734–750 show a composition bias toward low complexity; it reads LPLLRLTCAGDPGASRP.

As to expression, expressed in neurons.

The protein resides in the nucleus. Might have DNA-binding ability. This is 5E5 antigen from Rattus norvegicus (Rat).